A 372-amino-acid polypeptide reads, in one-letter code: GDP-mannose 4,6-dehydratase (372 aa).

Residues 8–13 (GITGQD), 63–64 (DL), 85–89 (LGAQS), and Tyr100 contribute to the NADP(+) site. Residue Thr132 is part of the active site. Catalysis depends on nucleophile residues Glu134 and Tyr156. Lys160, His186, and Arg191 together coordinate NADP(+).

Belongs to the NAD(P)-dependent epimerase/dehydratase family. GDP-mannose 4,6-dehydratase subfamily. Requires NADP(+) as cofactor.

It carries out the reaction GDP-alpha-D-mannose = GDP-4-dehydro-alpha-D-rhamnose + H2O. It functions in the pathway bacterial outer membrane biogenesis; LPS O-antigen biosynthesis. It participates in nucleotide-sugar biosynthesis; GDP-L-fucose biosynthesis via de novo pathway; GDP-L-fucose from GDP-alpha-D-mannose: step 1/2. In terms of biological role, catalyzes the conversion of GDP-D-mannose to GDP-4-dehydro-6-deoxy-D-mannose. The chain is GDP-mannose 4,6-dehydratase from Yersinia enterocolitica serotype O:8 / biotype 1B (strain NCTC 13174 / 8081).